Reading from the N-terminus, the 265-residue chain is Flagellar brake protein YcgR (265 aa).

Residues 135–252 (QRRESYRLET…DETIQRYIFR (118 aa)) enclose the PilZ domain.

It belongs to the YcgR family. In terms of assembly, monomer. Interacts with the flagellar basal bodies.

It is found in the bacterial flagellum basal body. Its function is as follows. Acts as a flagellar brake, regulating swimming and swarming in a bis-(3'-5') cyclic diguanylic acid (c-di-GMP)-dependent manner. Binds 1 c-di-GMP dimer per subunit. Increasing levels of c-di-GMP lead to decreased motility. The protein is Flagellar brake protein YcgR of Xanthomonas campestris pv. campestris (strain B100).